We begin with the raw amino-acid sequence, 341 residues long: 4-hydroxy-2-oxovalerate aldolase 2 (341 aa).

A Pyruvate carboxyltransferase domain is found at 8-260 (VTVHDMTLRD…ETGVDVAKIT (253 aa)). 16–17 (RD) lines the substrate pocket. Mn(2+) is bound at residue Asp17. His20 (proton acceptor) is an active-site residue. Ser170 and His199 together coordinate substrate. 2 residues coordinate Mn(2+): His199 and His201. Tyr290 contributes to the substrate binding site.

The protein belongs to the 4-hydroxy-2-oxovalerate aldolase family.

It carries out the reaction (S)-4-hydroxy-2-oxopentanoate = acetaldehyde + pyruvate. The chain is 4-hydroxy-2-oxovalerate aldolase 2 from Dechloromonas aromatica (strain RCB).